A 268-amino-acid polypeptide reads, in one-letter code: Tryptophan synthase alpha chain (268 aa).

Residues glutamate 49 and aspartate 60 each act as proton acceptor in the active site.

This sequence belongs to the TrpA family. In terms of assembly, tetramer of two alpha and two beta chains.

It catalyses the reaction (1S,2R)-1-C-(indol-3-yl)glycerol 3-phosphate + L-serine = D-glyceraldehyde 3-phosphate + L-tryptophan + H2O. The protein operates within amino-acid biosynthesis; L-tryptophan biosynthesis; L-tryptophan from chorismate: step 5/5. The alpha subunit is responsible for the aldol cleavage of indoleglycerol phosphate to indole and glyceraldehyde 3-phosphate. In Escherichia coli O81 (strain ED1a), this protein is Tryptophan synthase alpha chain.